The sequence spans 404 residues: Beta-ketoacyl-[acyl-carrier-protein] synthase III, chloroplastic (404 aa).

The transit peptide at 1-43 directs the protein to the chloroplast; that stretch reads MANASGFFTHPSIPNLRSRIHVPVRVSGSGFCVSNRFSKRVLC. Residues cysteine 179, histidine 330, and asparagine 360 contribute to the active site.

Belongs to the thiolase-like superfamily. FabH family.

It is found in the plastid. Its subcellular location is the chloroplast. The enzyme catalyses malonyl-[ACP] + acetyl-CoA + H(+) = 3-oxobutanoyl-[ACP] + CO2 + CoA. Its pathway is lipid metabolism; fatty acid biosynthesis. Functionally, catalyzes the condensation reaction of fatty acid synthesis by the addition to an acyl acceptor of two carbons from malonyl-ACP. KAS III catalyzes the first condensation reaction which initiates fatty acid synthesis and may therefore play a role in governing the total rate of fatty acid production. Possesses both acetoacetyl-ACP synthase and acetyl transacylase activities. In Arabidopsis thaliana (Mouse-ear cress), this protein is Beta-ketoacyl-[acyl-carrier-protein] synthase III, chloroplastic.